A 355-amino-acid chain; its full sequence is dTDP-glucose 4,6-dehydratase (355 aa).

NAD(+)-binding positions include 12–13 (FI), 33–36 (DKLT), 59–60 (DI), 81–85 (LAAES), and threonine 100. Serine 85 contacts substrate. Threonine 134 contacts substrate. The active-site Proton donor is aspartate 135. Residues glutamate 136 and tyrosine 160 each act as proton acceptor in the active site. 160-164 (YSASK) is an NAD(+) binding site. Position 189 (asparagine 189) interacts with substrate. Residue asparagine 190 coordinates NAD(+). Substrate is bound by residues 199 to 200 (KL), 215 to 217 (PVY), arginine 224, asparagine 259, and 293 to 297 (DRPGH).

It belongs to the NAD(P)-dependent epimerase/dehydratase family. dTDP-glucose dehydratase subfamily. Homodimer. NAD(+) serves as cofactor.

The enzyme catalyses dTDP-alpha-D-glucose = dTDP-4-dehydro-6-deoxy-alpha-D-glucose + H2O. The protein operates within carbohydrate biosynthesis; dTDP-L-rhamnose biosynthesis. It participates in bacterial outer membrane biogenesis; LPS O-antigen biosynthesis. Its function is as follows. Catalyzes the dehydration of dTDP-D-glucose to form dTDP-6-deoxy-D-xylo-4-hexulose via a three-step process involving oxidation, dehydration and reduction. This chain is dTDP-glucose 4,6-dehydratase (rfbB1), found in Neisseria meningitidis serogroup B (strain ATCC BAA-335 / MC58).